The primary structure comprises 494 residues: Aspartyl/glutamyl-tRNA(Asn/Gln) amidotransferase subunit B (494 aa).

The protein belongs to the GatB/GatE family. GatB subfamily. As to quaternary structure, heterotrimer of A, B and C subunits.

The enzyme catalyses L-glutamyl-tRNA(Gln) + L-glutamine + ATP + H2O = L-glutaminyl-tRNA(Gln) + L-glutamate + ADP + phosphate + H(+). It catalyses the reaction L-aspartyl-tRNA(Asn) + L-glutamine + ATP + H2O = L-asparaginyl-tRNA(Asn) + L-glutamate + ADP + phosphate + 2 H(+). Allows the formation of correctly charged Asn-tRNA(Asn) or Gln-tRNA(Gln) through the transamidation of misacylated Asp-tRNA(Asn) or Glu-tRNA(Gln) in organisms which lack either or both of asparaginyl-tRNA or glutaminyl-tRNA synthetases. The reaction takes place in the presence of glutamine and ATP through an activated phospho-Asp-tRNA(Asn) or phospho-Glu-tRNA(Gln). The polypeptide is Aspartyl/glutamyl-tRNA(Asn/Gln) amidotransferase subunit B (Rhodopseudomonas palustris (strain BisB18)).